The primary structure comprises 448 residues: Signal recognition particle 54 kDa protein (448 aa).

GTP-binding positions include 107–114 (GIQGSGKT), 189–193 (DSAGR), and 247–250 (TKLD).

Belongs to the GTP-binding SRP family. SRP54 subfamily. In terms of assembly, part of the signal recognition particle protein translocation system, which is composed of SRP and FtsY. Archaeal SRP consists of a 7S RNA molecule of 300 nucleotides and two protein subunits: SRP54 and SRP19.

The protein localises to the cytoplasm. The catalysed reaction is GTP + H2O = GDP + phosphate + H(+). Its function is as follows. Involved in targeting and insertion of nascent membrane proteins into the cytoplasmic membrane. Binds to the hydrophobic signal sequence of the ribosome-nascent chain (RNC) as it emerges from the ribosomes. The SRP-RNC complex is then targeted to the cytoplasmic membrane where it interacts with the SRP receptor FtsY. The polypeptide is Signal recognition particle 54 kDa protein (Thermococcus kodakarensis (strain ATCC BAA-918 / JCM 12380 / KOD1) (Pyrococcus kodakaraensis (strain KOD1))).